Here is a 109-residue protein sequence, read N- to C-terminus: Large ribosomal subunit protein uL24 (109 aa).

It belongs to the universal ribosomal protein uL24 family. In terms of assembly, part of the 50S ribosomal subunit.

One of two assembly initiator proteins, it binds directly to the 5'-end of the 23S rRNA, where it nucleates assembly of the 50S subunit. Its function is as follows. One of the proteins that surrounds the polypeptide exit tunnel on the outside of the subunit. The sequence is that of Large ribosomal subunit protein uL24 from Ehrlichia ruminantium (strain Gardel).